Here is a 1131-residue protein sequence, read N- to C-terminus: Replication factor C subunit 1 (1131 aa).

Disordered regions lie at residues 14–87 (KKPV…KSEK), 92–111 (YKPG…ETDE), 120–201 (AASK…NDEA), and 225–378 (ARTL…NYQA). The span at 38-54 (GVKEAKVNNSGKEDASK) shows a compositional bias: basic and acidic residues. A Glycyl lysine isopeptide (Lys-Gly) (interchain with G-Cter in SUMO2) cross-link involves residue lysine 49. Tyrosine 66 bears the Phosphotyrosine mark. 4 positions are modified to phosphoserine: serine 68, serine 70, serine 72, and serine 107. A Phosphothreonine modification is found at threonine 109. Polar residues predominate over residues 127–138 (NGVSTNSYLGTS). Serine 155 carries the post-translational modification Phosphoserine. A phosphothreonine mark is found at threonine 160 and threonine 162. Phosphoserine occurs at positions 163, 172, 189, 244, 250, 253, 281, and 309. A compositionally biased stretch (basic and acidic residues) spans 184–201 (KRKESSQNTEDSRLNDEA). Positions 308–319 (SSPKASAKLALM) are enriched in low complexity. Basic and acidic residues-rich tracts occupy residues 334 to 350 (AARR…EKTT) and 359 to 373 (TKRE…EKKR). An interferon-stimulated-response-element binding region region spans residues 354 to 528 (TKVSPTKRES…KKESESKKCK (175 aa)). Serine 365 is modified (phosphoserine). The BRCT domain occupies 399 to 489 (GAENCLEGLT…PGKRSKYEMA (91 aa)). The disordered stretch occupies residues 491–525 (EAEMKKEKSKLERTPQKNDQGKRKISPAKKESESK). The residue at position 535 (serine 535) is a Phosphoserine. 635-642 (GPPGVGKT) contacts ATP. Residues 1073 to 1131 (PALDSEYSEEFQEDDTQSEKEQDAVETDAMIKKKTRSSKPSKSEREKESKKGKGKNWKK) are disordered. The segment covering 1078 to 1088 (EYSEEFQEDDT) has biased composition (acidic residues). At serine 1090 the chain carries Phosphoserine. Positions 1104 to 1108 (KKKTR) match the Nuclear localization signal motif. A compositionally biased stretch (basic and acidic residues) spans 1113 to 1123 (SKSEREKESKK).

This sequence belongs to the activator 1 large subunit family. Large subunit of the RFC complex, an heteropentameric complex consisting of RFC1 and four small subunits RFC2, RFC3, RFC4 and RFC5; the RFC complex interacts with PCNA and the interaction involves RFC1.

Its subcellular location is the nucleus. Its function is as follows. Subunit of the replication factor C (RFC) complex which acts during elongation of primed DNA templates by DNA polymerases delta and epsilon, and is necessary for ATP-dependent loading of proliferating cell nuclear antigen (PCNA) onto primed DNA. This subunit binds to the primer-template junction. Binds the PO-B transcription element as well as other GA rich DNA sequences. Can bind single- or double-stranded DNA. This chain is Replication factor C subunit 1 (Rfc1), found in Mus musculus (Mouse).